A 296-amino-acid chain; its full sequence is 4-diphosphocytidyl-2-C-methyl-D-erythritol kinase (296 aa).

K22 is a catalytic residue. An ATP-binding site is contributed by 105 to 115 (PMGGGLGGGSS). The active site involves D147.

Belongs to the GHMP kinase family. IspE subfamily.

It carries out the reaction 4-CDP-2-C-methyl-D-erythritol + ATP = 4-CDP-2-C-methyl-D-erythritol 2-phosphate + ADP + H(+). It participates in isoprenoid biosynthesis; isopentenyl diphosphate biosynthesis via DXP pathway; isopentenyl diphosphate from 1-deoxy-D-xylulose 5-phosphate: step 3/6. In terms of biological role, catalyzes the phosphorylation of the position 2 hydroxy group of 4-diphosphocytidyl-2C-methyl-D-erythritol. The polypeptide is 4-diphosphocytidyl-2-C-methyl-D-erythritol kinase (Photobacterium profundum (strain SS9)).